A 296-amino-acid chain; its full sequence is MNIVVLGPGAVGSLWALHLHSAGHQVALWSRQAQPTITLQLDEEAPISFRNQNLDTLIHADLLLITVKAWQVEAALQPLLPHLNRETILLFMHNGMGAVEAISESLTHFPVLFATTTHGALKATLNQVSHTGFGQTQVGPFNALGARCDFIADVFNHALAPVTWNPEIQQALWRKLAVNCAINPLTAIHQCANGALVAPEFTPIITAILDEVTAVMQAEAISGEAEALRDGVYQVIQATAANLSSMHQDVFHRRPTEIDFITGYVVRKGEQHGIATPVNSALYQQIKTLEQSWSKA.

NADP(+) is bound by residues 7–12 (GPGAVG), Asn94, and Ala120. Asn94 is a binding site for substrate. The Proton donor role is filled by Lys175. Substrate is bound by residues Asn179, Asn183, Asn193, and Ser245. Glu257 serves as a coordination point for NADP(+).

Belongs to the ketopantoate reductase family.

The protein localises to the cytoplasm. The catalysed reaction is (R)-pantoate + NADP(+) = 2-dehydropantoate + NADPH + H(+). The protein operates within cofactor biosynthesis; (R)-pantothenate biosynthesis; (R)-pantoate from 3-methyl-2-oxobutanoate: step 2/2. Its function is as follows. Catalyzes the NADPH-dependent reduction of ketopantoate into pantoic acid. This is 2-dehydropantoate 2-reductase (panE) from Vibrio cholerae serotype O1 (strain ATCC 39315 / El Tor Inaba N16961).